Here is a 401-residue protein sequence, read N- to C-terminus: Sorting nexin-4 (401 aa).

Residues 17–139 form the PX domain; that stretch reads FLQCLVTEPR…AFLENPNWNN (123 aa). A 1,2-diacyl-sn-glycero-3-phospho-(1D-myo-inositol-3-phosphate) contacts are provided by Arg-60, Ser-62, Lys-86, and Arg-105. The residue at position 62 (Ser-62) is a Phosphoserine. Residues 190–292 adopt a coiled-coil conformation; it reads ISNLEGSIQK…DVEALQEYSA (103 aa).

Belongs to the sorting nexin family.

Its subcellular location is the cytoplasm. The protein localises to the cytosol. It is found in the preautophagosomal structure membrane. It localises to the endosome membrane. Sorting nexin, involved in the separation or division of vacuoles throughout the entire life cycle of the cells. Involved in retrieval of late-Golgi SNAREs from post-Golgi endosomes to the trans-Golgi network, for cytoplasm to vacuole transport (Cvt), and autophagy of large cargos including mitophagy, pexophagy and glycophagy. The protein is Sorting nexin-4 (snx4) of Schizosaccharomyces pombe (strain 972 / ATCC 24843) (Fission yeast).